An 866-amino-acid chain; its full sequence is Probable beta-glucosidase F (866 aa).

Residues 1 to 20 form the signal peptide; the sequence is MAAFPAYLALLSYLVPGALS. Asn65, Asn73, and Asn257 each carry an N-linked (GlcNAc...) asparagine glycan. Asp285 is an active-site residue. Asn328, Asn360, Asn395, Asn421, Asn474, Asn659, Asn664, and Asn724 each carry an N-linked (GlcNAc...) asparagine glycan. The segment at 725-748 is disordered; it reads SSKTYPYPDGYTTEPKPAPRAGGA.

It belongs to the glycosyl hydrolase 3 family.

The protein localises to the secreted. The enzyme catalyses Hydrolysis of terminal, non-reducing beta-D-glucosyl residues with release of beta-D-glucose.. Its pathway is glycan metabolism; cellulose degradation. Functionally, beta-glucosidases are one of a number of cellulolytic enzymes involved in the degradation of cellulosic biomass. Catalyzes the last step releasing glucose from the inhibitory cellobiose. The protein is Probable beta-glucosidase F (bglF) of Aspergillus flavus (strain ATCC 200026 / FGSC A1120 / IAM 13836 / NRRL 3357 / JCM 12722 / SRRC 167).